A 235-amino-acid polypeptide reads, in one-letter code: uncharacterized protein (235 aa).

The segment at 1–98 is disordered; sequence MDTKLSVTGA…NKKNTLHYSK (98 aa). Residues lysine 16 and lysine 35 each participate in a glycyl lysine isopeptide (Lys-Gly) (interchain with G-Cter in ubiquitin) cross-link. Residues 38 to 50 show a composition bias toward basic residues; that stretch reads NGNKKRNKNRNRN. A compositionally biased stretch (basic and acidic residues) spans 51 to 60; the sequence is KKTETKEQNE.

This is an uncharacterized protein from Saccharomyces cerevisiae (strain ATCC 204508 / S288c) (Baker's yeast).